Consider the following 428-residue polypeptide: Histidine--tRNA ligase (428 aa).

It belongs to the class-II aminoacyl-tRNA synthetase family. Homodimer.

The protein resides in the cytoplasm. It carries out the reaction tRNA(His) + L-histidine + ATP = L-histidyl-tRNA(His) + AMP + diphosphate + H(+). The sequence is that of Histidine--tRNA ligase from Mesomycoplasma hyopneumoniae (strain 7448) (Mycoplasma hyopneumoniae).